The primary structure comprises 360 residues: Photosystem II protein D1 1 (360 aa).

A run of 3 helical transmembrane segments spans residues 29–46 (YVGW…TAAI), 118–133 (HFLI…QWEL), and 142–156 (WIPV…AATA). Chlorophyll a is bound at residue His-118. Tyr-126 is a binding site for pheophytin a. [CaMn4O5] cluster contacts are provided by Asp-170 and Glu-189. Residues 197 to 218 (FHMIGVAGVFGGALFSAMHGSL) traverse the membrane as a helical segment. Residue His-198 participates in chlorophyll a binding. Residues His-215 and 264–265 (SF) contribute to the a quinone site. His-215 contacts Fe cation. Position 272 (His-272) interacts with Fe cation. A helical membrane pass occupies residues 274–288 (FLAAWPVIGIWFAAL). 4 residues coordinate [CaMn4O5] cluster: His-332, Glu-333, Asp-342, and Ala-344. Positions 345–360 (SGEVQPIALAAPAIAS) are excised as a propeptide.

It belongs to the reaction center PufL/M/PsbA/D family. In terms of assembly, PSII is composed of 1 copy each of membrane proteins PsbA, PsbB, PsbC, PsbD, PsbE, PsbF, PsbH, PsbI, PsbJ, PsbK, PsbL, PsbM, PsbT, PsbX, PsbY, PsbZ, Psb30/Ycf12, peripheral proteins PsbO, CyanoQ (PsbQ), PsbU, PsbV and a large number of cofactors. It forms dimeric complexes. The D1/D2 heterodimer binds P680, chlorophylls that are the primary electron donor of PSII, and subsequent electron acceptors. It shares a non-heme iron and each subunit binds pheophytin, quinone, additional chlorophylls, carotenoids and lipids. D1 provides most of the ligands for the Mn4-Ca-O5 cluster of the oxygen-evolving complex (OEC). There is also a Cl(-1) ion associated with D1 and D2, which is required for oxygen evolution. The PSII complex binds additional chlorophylls, carotenoids and specific lipids. is required as a cofactor. Tyr-161 forms a radical intermediate that is referred to as redox-active TyrZ, YZ or Y-Z. Post-translationally, C-terminally processed by CtpA; processing is essential to allow assembly of the oxygen-evolving complex and thus photosynthetic growth.

The protein localises to the cellular thylakoid membrane. It catalyses the reaction 2 a plastoquinone + 4 hnu + 2 H2O = 2 a plastoquinol + O2. Photosystem II (PSII) is a light-driven water:plastoquinone oxidoreductase that uses light energy to abstract electrons from H(2)O, generating O(2) and a proton gradient subsequently used for ATP formation. It consists of a core antenna complex that captures photons, and an electron transfer chain that converts photonic excitation into a charge separation. The D1/D2 (PsbA/PsbD) reaction center heterodimer binds P680, the primary electron donor of PSII as well as several subsequent electron acceptors. In Trichormus variabilis (strain ATCC 29413 / PCC 7937) (Anabaena variabilis), this protein is Photosystem II protein D1 1.